Consider the following 245-residue polypeptide: MSFTSMPSLREQQHPLIRQLADCIEAAWHQHLDLSPYHLPDELGYVEGRLEGEKLTIENRCYQTPQFRKMHLELANIGNMLDILHCVMFPRPQYNLPMFGCDLVGGRGQISAAIADLSPIQLERTLPESYTTALAQLPVLNFSQPRELPEWGNIFSDFCIFVRPGSPEEEAMFLSRVREFLDIHCMQAIASHPVSVEQVTQNLAGQHNYCTKQQQNDKTRRVLEKAFGPVWAENYMTTVLFDLPT.

The protein belongs to the HY2 family.

The enzyme catalyses (2R,3Z)-phycocyanobilin + 4 oxidized [2Fe-2S]-[ferredoxin] = biliverdin IXalpha + 4 reduced [2Fe-2S]-[ferredoxin] + 4 H(+). In terms of biological role, catalyzes the four-electron reduction of biliverdin IX-alpha (2-electron reduction at both the A and D rings); the reaction proceeds via an isolatable 2-electron intermediate, 181,182-dihydrobiliverdin. The chain is Phycocyanobilin:ferredoxin oxidoreductase (pcyA) from Nostoc punctiforme (strain ATCC 29133 / PCC 73102).